Reading from the N-terminus, the 188-residue chain is Elongation factor P (188 aa).

This sequence belongs to the elongation factor P family.

The protein resides in the cytoplasm. It participates in protein biosynthesis; polypeptide chain elongation. Functionally, involved in peptide bond synthesis. Stimulates efficient translation and peptide-bond synthesis on native or reconstituted 70S ribosomes in vitro. Probably functions indirectly by altering the affinity of the ribosome for aminoacyl-tRNA, thus increasing their reactivity as acceptors for peptidyl transferase. This is Elongation factor P from Phocaeicola vulgatus (strain ATCC 8482 / DSM 1447 / JCM 5826 / CCUG 4940 / NBRC 14291 / NCTC 11154) (Bacteroides vulgatus).